A 293-amino-acid chain; its full sequence is Movement protein BC1 (293 aa).

It belongs to the begomovirus movement protein BC1 family. Binds to dimeric supercoiled plasmid DNA. Phosphorylated.

Its subcellular location is the host cell membrane. The protein resides in the host microsome membrane. It localises to the host endoplasmic reticulum membrane. In terms of biological role, transports viral genome to neighboring plant cells directly through plasmosdesmata, without any budding. The movement protein allows efficient cell to cell propagation, by bypassing the host cell wall barrier. Begomovirus genome is shuttled out of nucleus by Nuclear shuttle protein (NSP) and the movement protein transports the DNA-NSP complex to cell plasmodesmata and facilitates further movement across the cell wall. The protein is Movement protein BC1 of Cucurbita moschata (Winter crookneck squash).